The primary structure comprises 166 residues: Small ribosomal subunit protein uS5 (166 aa).

An S5 DRBM domain is found at Leu-11 to Val-74.

It belongs to the universal ribosomal protein uS5 family. As to quaternary structure, part of the 30S ribosomal subunit. Contacts proteins S4 and S8.

Its function is as follows. With S4 and S12 plays an important role in translational accuracy. In terms of biological role, located at the back of the 30S subunit body where it stabilizes the conformation of the head with respect to the body. This chain is Small ribosomal subunit protein uS5, found in Pectobacterium atrosepticum (strain SCRI 1043 / ATCC BAA-672) (Erwinia carotovora subsp. atroseptica).